Reading from the N-terminus, the 435-residue chain is MSGYFSGFSLNKITDSIATAAHKTQDTLNNALANANVNLNDPQTRLSIKSRTRFVQESLGTVSDISKLPPQYQFLEKKSDSLEKVCKRILLVSKTFEVEGYDYPPNLTESISDWWSLNKDGWFGSKKSESSTKKKGSNHDDAFLPRSFAQAISKAAVDCECEFQNLEHNEKAELKKKKESIKTAQTTEAQGADHNEEDEEDEEDEEDDEDLSNLIKVFDSWSTCYKNIDEGKAEMDSMMVKEFNKKLETLINQDFKKVHDLRKKVEESRLKFDTMRYEVKAKEAELEAKKAEATGEAHSKDVSAKDISANTTTSFDETPSTEDEKPKSEGAEEESKKEANEPTVDDVADRKEDLKSNKVNDEPPIEESEDNKLLEKLEDEFVSNTTAAVETMEEITDSSEILGLIKLFQNFQLVYFRQCVQEVEANLKVLNGLEI.

Ser47 carries the phosphoserine modification. 2 disordered regions span residues 174 to 210 (LKKK…DDED) and 290 to 372 (KAEA…EDNK). Acidic residues predominate over residues 195–210 (NEEDEEDEEDEEDDED). Positions 290–304 (KAEATGEAHSKDVSA) are enriched in basic and acidic residues. Polar residues predominate over residues 308–318 (SANTTTSFDET). Composition is skewed to basic and acidic residues over residues 322 to 340 (EDEK…KEAN) and 347 to 361 (VADR…KVND).

It localises to the cytoplasm. This is an uncharacterized protein from Saccharomyces cerevisiae (strain ATCC 204508 / S288c) (Baker's yeast).